The sequence spans 313 residues: Solute carrier family 35 member E3 (313 aa).

Helical transmembrane passes span 17 to 37, 40 to 60, 77 to 97, 100 to 120, 130 to 147, 153 to 173, 187 to 206, 225 to 245, 252 to 272, and 275 to 295; these read GLLLNLLVSICIVFLNKWIYV, GFPNMSLTLVHFVVTWLGLYV, LLLLALSFCGFVVFTNLSLQN, IGTYQLAKAMTTPVIIVIQTL, IRLTLIPITLGVILNSYY, FLGTVFAALGVLVTSLYQVWV, LLYYQAPMSSAMLLVAVPFF, LMVLLSGVIAFMVNLSIYWII, TYNMFGHFKFCITLFGGYVLF, and PLSINQGLGMLCTLFGILAYT.

It belongs to the TPT transporter family. SLC35E subfamily.

Its subcellular location is the membrane. Putative transporter. The protein is Solute carrier family 35 member E3 (SLC35E3) of Bos taurus (Bovine).